Reading from the N-terminus, the 95-residue chain is MSDPITYNPGAVADFATDVASRAGQLQSIFDDTSNRTHALQEFFAGHGASGFFEAQAQMLSGLQGLIDTIRQHGQTTSHVLDSAISTDQHIAGLF.

Belongs to the WXG100 family. ESAT-6 subfamily.

Its subcellular location is the secreted. The protein is ESAT-6-like protein EsxC of Mycolicibacterium paratuberculosis (strain ATCC BAA-968 / K-10) (Mycobacterium paratuberculosis).